The chain runs to 1402 residues: DNA-directed RNA polymerase subunit beta' (1402 aa).

The Zn(2+) site is built by C70, C72, C85, and C88. D460, D462, and D464 together coordinate Mg(2+). Residues C812, C886, C893, and C896 each coordinate Zn(2+). The interval 1373 to 1402 (DRFLNGSASSNEKSRSAGVLEATDEESAGD) is disordered.

This sequence belongs to the RNA polymerase beta' chain family. The RNAP catalytic core consists of 2 alpha, 1 beta, 1 beta' and 1 omega subunit. When a sigma factor is associated with the core the holoenzyme is formed, which can initiate transcription. Requires Mg(2+) as cofactor. It depends on Zn(2+) as a cofactor.

The catalysed reaction is RNA(n) + a ribonucleoside 5'-triphosphate = RNA(n+1) + diphosphate. DNA-dependent RNA polymerase catalyzes the transcription of DNA into RNA using the four ribonucleoside triphosphates as substrates. The polypeptide is DNA-directed RNA polymerase subunit beta' (Dichelobacter nodosus (strain VCS1703A)).